The following is a 95-amino-acid chain: DASH complex subunit DAD3 (95 aa).

Belongs to the DASH complex DAD3 family. In terms of assembly, component of the DASH complex consisting of ASK1, DAD1, DAD2, DAD3, DAD4, DAM1, DUO1, HSK3, SPC19 and SPC34, with a stoichiometry of one copy of each subunit per complex. Multiple DASH complexes oligomerize to form a ring that encircles spindle microtubules and organizes the rod-like NDC80 complexes of the outer kinetochore. DASH complex oligomerization strengthens microtubule attachments. On cytoplasmic microtubules, DASH complexes appear to form patches instead of rings.

It is found in the chromosome. The protein resides in the centromere. Its subcellular location is the kinetochore. The protein localises to the cytoplasm. It localises to the cytoskeleton. It is found in the spindle. The protein resides in the nucleus. Its function is as follows. Component of the DASH complex that connects microtubules with kinetochores and couples microtubule depolymerisation to chromosome movement; it is involved in retrieving kinetochores to the spindle poles before their re-orientation on the spindle in early mitosis and allows microtubule depolymerization to pull chromosomes apart and resist detachment during anaphase. Kinetochores, consisting of a centromere-associated inner segment and a microtubule-contacting outer segment, play a crucial role in chromosome segregation by mediating the physical connection between centromeric DNA and microtubules. Kinetochores also serve as an input point for the spindle assembly checkpoint, which delays anaphase until all chromosomes have bioriented on the mitotic spindle. The sequence is that of DASH complex subunit DAD3 from Chaetomium thermophilum (strain DSM 1495 / CBS 144.50 / IMI 039719) (Thermochaetoides thermophila).